A 306-amino-acid polypeptide reads, in one-letter code: Methionyl-tRNA formyltransferase (306 aa).

Position 108-111 (108-111) interacts with (6S)-5,6,7,8-tetrahydrofolate; that stretch reads SLLP.

The protein belongs to the Fmt family.

It catalyses the reaction L-methionyl-tRNA(fMet) + (6R)-10-formyltetrahydrofolate = N-formyl-L-methionyl-tRNA(fMet) + (6S)-5,6,7,8-tetrahydrofolate + H(+). Attaches a formyl group to the free amino group of methionyl-tRNA(fMet). The formyl group appears to play a dual role in the initiator identity of N-formylmethionyl-tRNA by promoting its recognition by IF2 and preventing the misappropriation of this tRNA by the elongation apparatus. The chain is Methionyl-tRNA formyltransferase from Pseudarthrobacter chlorophenolicus (strain ATCC 700700 / DSM 12829 / CIP 107037 / JCM 12360 / KCTC 9906 / NCIMB 13794 / A6) (Arthrobacter chlorophenolicus).